The primary structure comprises 369 residues: MKQTIVIKIGTSSLTQPESGKLALSTIAALVETLTQLRQLGHRIILVSSGAVGVGCSRLNLKERPKKMAMKQAIAAVGQGRLIRVYDDLFNTLGQPIAQVLLTRRELIERSCYVNASNTFESLLELGVIPIVNENDTVAIEELKFGDNDTLSALVASLIHADWLFLLTDVDRLYSADPRLVPDAKPITLVNSDEFAQLQVKAGDRGSQWGTGGMATKLAAARIATGAGVRTVITHGGKPSNLLKILQGEAIGTQFEPQTRNDSARKRWIAYGLLPTGKLYLDSGAIRAICHQGKSLLAAGIIKVEGQFEASEAVQLCDETGQEMARGIVNYNSLEIDKIKGHHSDEISQILGYGGAETVVHRDNLSVNG.

Position 8 (Lys8) interacts with ATP. Substrate is bound by residues Ser49, Asp136, and Asn148. ATP is bound by residues 168-169 (TD) and 211-217 (TGGMATK). One can recognise a PUA domain in the interval 276–354 (TGKLYLDSGA…DEISQILGYG (79 aa)).

The protein belongs to the glutamate 5-kinase family.

It localises to the cytoplasm. It catalyses the reaction L-glutamate + ATP = L-glutamyl 5-phosphate + ADP. The protein operates within amino-acid biosynthesis; L-proline biosynthesis; L-glutamate 5-semialdehyde from L-glutamate: step 1/2. Functionally, catalyzes the transfer of a phosphate group to glutamate to form L-glutamate 5-phosphate. This chain is Glutamate 5-kinase, found in Rippkaea orientalis (strain PCC 8801 / RF-1) (Cyanothece sp. (strain PCC 8801)).